A 252-amino-acid chain; its full sequence is 2-succinyl-6-hydroxy-2,4-cyclohexadiene-1-carboxylate synthase (252 aa).

This sequence belongs to the AB hydrolase superfamily. MenH family. In terms of assembly, monomer.

The enzyme catalyses 5-enolpyruvoyl-6-hydroxy-2-succinyl-cyclohex-3-ene-1-carboxylate = (1R,6R)-6-hydroxy-2-succinyl-cyclohexa-2,4-diene-1-carboxylate + pyruvate. The protein operates within quinol/quinone metabolism; 1,4-dihydroxy-2-naphthoate biosynthesis; 1,4-dihydroxy-2-naphthoate from chorismate: step 3/7. Its pathway is quinol/quinone metabolism; menaquinone biosynthesis. Functionally, catalyzes a proton abstraction reaction that results in 2,5-elimination of pyruvate from 2-succinyl-5-enolpyruvyl-6-hydroxy-3-cyclohexene-1-carboxylate (SEPHCHC) and the formation of 2-succinyl-6-hydroxy-2,4-cyclohexadiene-1-carboxylate (SHCHC). The chain is 2-succinyl-6-hydroxy-2,4-cyclohexadiene-1-carboxylate synthase from Salmonella heidelberg (strain SL476).